Consider the following 107-residue polypeptide: Putative double-stranded DNA mimic protein CGSHiGG_01135 (107 aa).

It belongs to the putative dsDNA mimic protein family.

In terms of biological role, may act as a double-stranded DNA (dsDNA) mimic. Probably regulates the activity of a dsDNA-binding protein. This chain is Putative double-stranded DNA mimic protein CGSHiGG_01135, found in Haemophilus influenzae (strain PittGG).